The sequence spans 691 residues: Elongation factor G (691 aa).

Residues 8-283 form the tr-type G domain; that stretch reads EDYRNFGIMA…AVVDYLPSPA (276 aa). GTP contacts are provided by residues 17-24, 81-85, and 135-138; these read AHIDAGKT, DTPGH, and NKMD.

This sequence belongs to the TRAFAC class translation factor GTPase superfamily. Classic translation factor GTPase family. EF-G/EF-2 subfamily.

It is found in the cytoplasm. Functionally, catalyzes the GTP-dependent ribosomal translocation step during translation elongation. During this step, the ribosome changes from the pre-translocational (PRE) to the post-translocational (POST) state as the newly formed A-site-bound peptidyl-tRNA and P-site-bound deacylated tRNA move to the P and E sites, respectively. Catalyzes the coordinated movement of the two tRNA molecules, the mRNA and conformational changes in the ribosome. The protein is Elongation factor G of Methylobacterium radiotolerans (strain ATCC 27329 / DSM 1819 / JCM 2831 / NBRC 15690 / NCIMB 10815 / 0-1).